Here is a 158-residue protein sequence, read N- to C-terminus: Sec-independent protein translocase protein TatB (158 aa).

The helical transmembrane segment at Phe-2 to Gly-22 threads the bilayer. A disordered region spans residues Leu-86–Gly-158. 3 stretches are compositionally biased toward polar residues: residues Gln-88 to Thr-107, Gln-113 to Thr-136, and Glu-143 to Gly-158.

This sequence belongs to the TatB family. In terms of assembly, the Tat system comprises two distinct complexes: a TatABC complex, containing multiple copies of TatA, TatB and TatC subunits, and a separate TatA complex, containing only TatA subunits. Substrates initially bind to the TatABC complex, which probably triggers association of the separate TatA complex to form the active translocon.

Its subcellular location is the cell inner membrane. In terms of biological role, part of the twin-arginine translocation (Tat) system that transports large folded proteins containing a characteristic twin-arginine motif in their signal peptide across membranes. Together with TatC, TatB is part of a receptor directly interacting with Tat signal peptides. TatB may form an oligomeric binding site that transiently accommodates folded Tat precursor proteins before their translocation. The protein is Sec-independent protein translocase protein TatB of Shewanella putrefaciens (strain CN-32 / ATCC BAA-453).